The primary structure comprises 147 residues: UPF0260 protein Ent638_2368 (147 aa).

It belongs to the UPF0260 family.

This Enterobacter sp. (strain 638) protein is UPF0260 protein Ent638_2368.